The chain runs to 1018 residues: Transmembrane protein 132A (1018 aa).

The signal sequence occupies residues 1-32 (MTERKAAAPRGPYGAWFCLLVALALEVVRVSS). Residues 33–846 (NHDTLDPIYL…VTDLELGMYA (814 aa)) are Extracellular-facing. An N-linked (GlcNAc...) asparagine glycan is attached at N276. The interval 606–911 (IEVRSPLSDA…QLDRCSSSGP (306 aa)) is binds to HSPA5/GRP78. Positions 666–1018 (LPAPKQEVAL…NYMERIRGSS (353 aa)) are confers cellular localization similar to full-length form. The span at 807–818 (ERAEEEAGKEEN) shows a compositional bias: basic and acidic residues. The tract at residues 807–833 (ERAEEEAGKEENEAKEEEEDEEEMVPA) is disordered. Residues 819–830 (EAKEEEEDEEEM) are compositionally biased toward acidic residues. Residues 847–867 (LLGIFCLAILIFLVNGVVFVL) traverse the membrane as a helical segment. Residues 868 to 1018 (RYQRKEPPDS…NYMERIRGSS (151 aa)) are Cytoplasmic-facing. Positions 900-956 (SRQLDRCSSSGPPKGEGGCPCESGAGGDASTVAPSASESPAGSSSTLARKEAGGRRK) are disordered. 2 stretches are compositionally biased toward low complexity: residues 906–922 (CSSS…PCES) and 932–944 (APSA…GSSS).

Belongs to the TMEM132 family. Interacts with HSPA5/GRP78.

Its subcellular location is the golgi apparatus membrane. It is found in the endoplasmic reticulum membrane. Functionally, may play a role in embryonic and postnatal development of the brain. Increased resistance to cell death induced by serum starvation in cultured cells. Regulates cAMP-induced GFAP gene expression via STAT3 phosphorylation. The chain is Transmembrane protein 132A (Tmem132a) from Mus musculus (Mouse).